We begin with the raw amino-acid sequence, 243 residues long: tRNA (guanine-N(1)-)-methyltransferase (243 aa).

S-adenosyl-L-methionine contacts are provided by residues Gly112 and 131 to 136; that span reads LGDYVL.

It belongs to the RNA methyltransferase TrmD family. Homodimer.

It localises to the cytoplasm. The enzyme catalyses guanosine(37) in tRNA + S-adenosyl-L-methionine = N(1)-methylguanosine(37) in tRNA + S-adenosyl-L-homocysteine + H(+). In terms of biological role, specifically methylates guanosine-37 in various tRNAs. The polypeptide is tRNA (guanine-N(1)-)-methyltransferase (Leuconostoc mesenteroides subsp. mesenteroides (strain ATCC 8293 / DSM 20343 / BCRC 11652 / CCM 1803 / JCM 6124 / NCDO 523 / NBRC 100496 / NCIMB 8023 / NCTC 12954 / NRRL B-1118 / 37Y)).